The following is a 672-amino-acid chain: Spermatid perinuclear RNA-binding protein (672 aa).

Residues 5–362 (RSFANDDRHV…ALKRPFEDGV (358 aa)) enclose the DZF domain. The disordered stretch occupies residues 348–370 (GTGSSALKRPFEDGVGDDKDPNK). The span at 356–370 (RPFEDGVGDDKDPNK) shows a compositional bias: basic and acidic residues. Residues 386 to 452 (DLMNALMRLN…AVKVLQAMGY (67 aa)) enclose the DRBM 1 domain. Positions 463 to 494 (VSSDEKSDNEGKNETVSSISSNNTGNSTADTS) are disordered. Residues 465 to 475 (SDEKSDNEGKN) are compositionally biased toward basic and acidic residues. Residues 477 to 490 (TVSSISSNNTGNST) are compositionally biased toward low complexity. The DRBM 2 domain maps to 509-575 (SGKNPVMELN…ALAALEKLFS (67 aa)).

The protein localises to the cytoplasm. May be involved in normal spermatogenesis and sperm function. Binds to double-stranded DNA and RNA. The sequence is that of Spermatid perinuclear RNA-binding protein (STRBP) from Gallus gallus (Chicken).